A 185-amino-acid chain; its full sequence is Ribosome-recycling factor (185 aa).

It belongs to the RRF family.

The protein localises to the cytoplasm. In terms of biological role, responsible for the release of ribosomes from messenger RNA at the termination of protein biosynthesis. May increase the efficiency of translation by recycling ribosomes from one round of translation to another. This Haemophilus influenzae (strain ATCC 51907 / DSM 11121 / KW20 / Rd) protein is Ribosome-recycling factor.